Here is a 425-residue protein sequence, read N- to C-terminus: UPF0761 membrane protein PXO_04555 (425 aa).

6 helical membrane passes run 48–68 (VFALVPLAIVVFGVLSAFPAF), 105–125 (FTVAGMVALVASLLITLHSIE), 154–174 (GTMLAAASMAMAAYVFALPLF), 182–202 (LAEFAWRLAPMAVEFICIVLI), 219–239 (GALLAVILMEIVKWGFGVYLG), and 250–270 (ALSALPILLLWIYLSWVSVLL).

It belongs to the UPF0761 family.

Its subcellular location is the cell inner membrane. In Xanthomonas oryzae pv. oryzae (strain PXO99A), this protein is UPF0761 membrane protein PXO_04555.